A 292-amino-acid polypeptide reads, in one-letter code: Imipenem-hydrolyzing beta-lactamase (292 aa).

The N-terminal stretch at 1–27 (MSLNVKQSRIAILFSSCLISISFFSQA) is a signal peptide. Cysteines 70 and 240 form a disulfide. Ser71 serves as the catalytic Acyl-ester intermediate. Position 236-238 (236-238 (KTG)) interacts with substrate.

This sequence belongs to the class-A beta-lactamase family.

It catalyses the reaction a beta-lactam + H2O = a substituted beta-amino acid. Functionally, hydrolyzes carbapenems such as imipenem, which are extended-spectrum beta-lactam antibiotics. The protein is Imipenem-hydrolyzing beta-lactamase (nmcA) of Enterobacter cloacae.